The primary structure comprises 610 residues: Serine/threonine-protein kinase VRK1 (610 aa).

Residues 32-384 enclose the Protein kinase domain; it reads FIVGKQFATG…PRKRTTRKAV (353 aa). Residues 38 to 46 and K61 contribute to the ATP site; that span reads FATGGFGRI. The active-site Proton acceptor is D167. Disordered stretches follow at residues 317–476, 498–530, 544–577, and 590–610; these read IQKT…NKVA, ISVA…VGEG, KKAK…KGRR, and ERLA…SSEV. Residues 352-373 are compositionally biased toward basic and acidic residues; it reads AVKEESDNKDNDEVEVKPEKKA. Over residues 388-397 the composition is skewed to acidic residues; sequence NDSDDNEEQY. Positions 447-458 are enriched in low complexity; sequence TTPSSAASTSRS. Residues 465–474 are compositionally biased toward polar residues; the sequence is LTSSTASSNK. The segment covering 502-517 has biased composition (low complexity); sequence SDKSPTTSTPSSSSGL. Polar residues-rich tracts occupy residues 550–559 and 594–610; these read SGISSATKAS and SRQT…SSEV.

The protein belongs to the protein kinase superfamily. CK1 Ser/Thr protein kinase family. VRK subfamily. In terms of processing, autophosphorylates in vitro. As to expression, present in germ cells at all stages of progression from the mitotic zone to mature oocytes, but not in maturing spermatids (at the protein level). Expressed in the ventral nerve cord and vulva cells.

It is found in the nucleus. Its subcellular location is the cytoplasm. The protein localises to the cajal body. The catalysed reaction is L-seryl-[protein] + ATP = O-phospho-L-seryl-[protein] + ADP + H(+). It carries out the reaction L-threonyl-[protein] + ATP = O-phospho-L-threonyl-[protein] + ADP + H(+). Serine/threonine kinase that phosphorylates baf-1, thus regulating the association of baf-1 with chromatin and nuclear membrane proteins during nuclear envelope formation. May act through the egl-17 signaling pathway. Essential in hermaphrodites for formation of the vulva, uterus, and uterine seam cells and for development and maintenance of the somatic gonad and thus the germ line. Acts to prevent cep-1 from triggering an inappropriate cell cycle arrest, thereby promoting germ cell proliferation. Regulates anchor cell polarity and the timing of anchor cell invasion through the basement membranes separating vulval and somatic gonadal cells during the L3 larval stage. The protein is Serine/threonine-protein kinase VRK1 of Caenorhabditis elegans.